We begin with the raw amino-acid sequence, 136 residues long: Small ribosomal subunit protein eS17B (136 aa).

Belongs to the eukaryotic ribosomal protein eS17 family. In terms of assembly, component of the small ribosomal subunit (SSU). Mature yeast ribosomes consist of a small (40S) and a large (60S) subunit. The 40S small subunit contains 1 molecule of ribosomal RNA (18S rRNA) and 33 different proteins (encoded by 57 genes). The large 60S subunit contains 3 rRNA molecules (25S, 5.8S and 5S rRNA) and 46 different proteins (encoded by 81 genes).

Its subcellular location is the cytoplasm. Component of the ribosome, a large ribonucleoprotein complex responsible for the synthesis of proteins in the cell. The small ribosomal subunit (SSU) binds messenger RNAs (mRNAs) and translates the encoded message by selecting cognate aminoacyl-transfer RNA (tRNA) molecules. The large subunit (LSU) contains the ribosomal catalytic site termed the peptidyl transferase center (PTC), which catalyzes the formation of peptide bonds, thereby polymerizing the amino acids delivered by tRNAs into a polypeptide chain. The nascent polypeptides leave the ribosome through a tunnel in the LSU and interact with protein factors that function in enzymatic processing, targeting, and the membrane insertion of nascent chains at the exit of the ribosomal tunnel. The sequence is that of Small ribosomal subunit protein eS17B from Saccharomyces cerevisiae (strain ATCC 204508 / S288c) (Baker's yeast).